A 591-amino-acid chain; its full sequence is MLKSISSSSGDDHLLSLIVSSTGKLHLRQIHALLLRTSLIRNSDVFHHFLSRLALSLIPRDINYSCRVFSQRLNPTLSHCNTMIRAFSLSQTPCEGFRLFRSLRRNSSLPANPLSSSFALKCCIKSGDLLGGLQIHGKIFSDGFLSDSLLMTTLMDLYSTCENSTDACKVFDEIPKRDTVSWNVLFSCYLRNKRTRDVLVLFDKMKNDVDGCVKPDGVTCLLALQACANLGALDFGKQVHDFIDENGLSGALNLSNTLVSMYSRCGSMDKAYQVFYGMRERNVVSWTALISGLAMNGFGKEAIEAFNEMLKFGISPEEQTLTGLLSACSHSGLVAEGMMFFDRMRSGEFKIKPNLHHYGCVVDLLGRARLLDKAYSLIKSMEMKPDSTIWRTLLGACRVHGDVELGERVISHLIELKAEEAGDYVLLLNTYSTVGKWEKVTELRSLMKEKRIHTKPGCSAIELQGTVHEFIVDDVSHPRKEEIYKMLAEINQQLKIAGYVAEITSELHNLESEEEKGYALRYHSEKLAIAFGILVTPPGTTIRVTKNLRTCVDCHNFAKFVSDVYDRIVIVRDRSRFHHFKGGSCSCNDFW.

PPR repeat units lie at residues 76-110 (TLSH…SSLP), 112-146 (NPLS…GFLS), 147-177 (DSLL…IPKR), 178-208 (DTVS…MKND), 216-250 (DGVT…GLSG), 251-281 (ALNL…MRER), 282-316 (NVVS…GISP), 317-351 (EEQT…EFKI), and 354-384 (NLHH…MEMK). Residues 389–464 (IWRTLLGACR…KPGCSAIELQ (76 aa)) are type E motif. Positions 465–495 (GTVHEFIVDDVSHPRKEEIYKMLAEINQQLK) are type E(+) motif. The interval 496–591 (IAGYVAEITS…GGSCSCNDFW (96 aa)) is type DYW motif.

The protein belongs to the PPR family. PCMP-H subfamily.

In Arabidopsis thaliana (Mouse-ear cress), this protein is Pentatricopeptide repeat-containing protein At3g47530 (PCMP-H76).